Reading from the N-terminus, the 348-residue chain is Phospho-2-dehydro-3-deoxyheptonate aldolase, Trp-sensitive (348 aa).

This sequence belongs to the class-I DAHP synthase family.

It catalyses the reaction D-erythrose 4-phosphate + phosphoenolpyruvate + H2O = 7-phospho-2-dehydro-3-deoxy-D-arabino-heptonate + phosphate. It functions in the pathway metabolic intermediate biosynthesis; chorismate biosynthesis; chorismate from D-erythrose 4-phosphate and phosphoenolpyruvate: step 1/7. Its function is as follows. Stereospecific condensation of phosphoenolpyruvate (PEP) and D-erythrose-4-phosphate (E4P) giving rise to 3-deoxy-D-arabino-heptulosonate-7-phosphate (DAHP). The protein is Phospho-2-dehydro-3-deoxyheptonate aldolase, Trp-sensitive (aroH) of Buchnera aphidicola subsp. Baizongia pistaciae (strain Bp).